The following is a 237-amino-acid chain: Germination-specific N-acetylmuramoyl-L-alanine amidase (237 aa).

The first 27 residues, 1-27 (MRKKLKWLSFLLGFIILLFLFKYQFSN), serve as a signal peptide directing secretion. The region spanning 43-226 (IYLDPGHGGP…VASSIYKGIL (184 aa)) is the MurNAc-LAA domain.

The protein belongs to the N-acetylmuramoyl-L-alanine amidase 3 family.

It is found in the secreted. The enzyme catalyses Hydrolyzes the link between N-acetylmuramoyl residues and L-amino acid residues in certain cell-wall glycopeptides.. Its function is as follows. Cleaves the peptide side chain from the N-acetylmuramic acid residues in peptidoglycan. This is a step in the formation of muramic delta-lactam residues in spore cortex. The polypeptide is Germination-specific N-acetylmuramoyl-L-alanine amidase (cwlD) (Bacillus subtilis (strain 168)).